The chain runs to 170 residues: NADH-ubiquinone oxidoreductase chain 6 (170 aa).

The next 5 helical transmembrane spans lie at 1 to 21 (MIYM…AVAS), 26 to 46 (FYAA…IVSF), 49 to 69 (SFLS…VFAY), 86 to 106 (VVFY…FLGG), and 138 to 158 (WVII…GIWV).

Belongs to the complex I subunit 6 family. Core subunit of respiratory chain NADH dehydrogenase (Complex I) which is composed of 45 different subunits.

It localises to the mitochondrion inner membrane. It catalyses the reaction a ubiquinone + NADH + 5 H(+)(in) = a ubiquinol + NAD(+) + 4 H(+)(out). Core subunit of the mitochondrial membrane respiratory chain NADH dehydrogenase (Complex I) which catalyzes electron transfer from NADH through the respiratory chain, using ubiquinone as an electron acceptor. Essential for the catalytic activity and assembly of complex I. The protein is NADH-ubiquinone oxidoreductase chain 6 (mt-nd6) of Xenopus laevis (African clawed frog).